Here is a 603-residue protein sequence, read N- to C-terminus: Probable methyltransferase-like protein 25 (603 aa).

The tract at residues 326-352 is disordered; sequence TSSQQIPNRETSEANKERRKMTSKSSE.

Probable methyltransferase. This Homo sapiens (Human) protein is Probable methyltransferase-like protein 25 (METTL25).